Here is a 29-residue protein sequence, read N- to C-terminus: uncharacterized protein (29 aa).

The protein localises to the plastid. The protein resides in the chloroplast. This is an uncharacterized protein from Trieres chinensis (Marine centric diatom).